The chain runs to 621 residues: Chaperone protein HtpG (621 aa).

The segment at 1 to 328 (MTQEKKKFDA…SEDLPLNISR (328 aa)) is a; substrate-binding. The interval 329–544 (ESLQHNSVLE…DSAMDIRMER (216 aa)) is b. Residues 475-495 (SDIDVEQTTSQSEDKNTHSKK) are disordered. A compositionally biased stretch (basic and acidic residues) spans 486 to 495 (SEDKNTHSKK). Residues 545–621 (FLIEQKQITA…LNDIVQKAIL (77 aa)) form a c region.

Belongs to the heat shock protein 90 family. In terms of assembly, homodimer.

It is found in the cytoplasm. Functionally, molecular chaperone. Has ATPase activity. The polypeptide is Chaperone protein HtpG (Rickettsia akari (strain Hartford)).